The sequence spans 445 residues: Phosphoglucosamine mutase (445 aa).

Serine 102 acts as the Phosphoserine intermediate in catalysis. The Mg(2+) site is built by serine 102, aspartate 241, aspartate 243, and aspartate 245. Serine 102 bears the Phosphoserine mark.

This sequence belongs to the phosphohexose mutase family. The cofactor is Mg(2+). Post-translationally, activated by phosphorylation.

It carries out the reaction alpha-D-glucosamine 1-phosphate = D-glucosamine 6-phosphate. Catalyzes the conversion of glucosamine-6-phosphate to glucosamine-1-phosphate. The chain is Phosphoglucosamine mutase from Cronobacter sakazakii (strain ATCC BAA-894) (Enterobacter sakazakii).